A 320-amino-acid chain; its full sequence is HPr kinase/phosphorylase (320 aa).

Residues His-141 and Lys-162 contribute to the active site. 156–163 contributes to the ATP binding site; that stretch reads GHSGLGKS. Position 163 (Ser-163) interacts with Mg(2+). Asp-180 functions as the Proton acceptor; for phosphorylation activity. Proton donor; for dephosphorylation activity in the catalytic mechanism. Positions 204 to 213 are important for the catalytic mechanism of both phosphorylation and dephosphorylation; it reads LEVRGLGILN. Glu-205 provides a ligand contact to Mg(2+). Arg-248 is a catalytic residue. Positions 269-274 are important for the catalytic mechanism of dephosphorylation; that stretch reads PVAVGR.

Belongs to the HPrK/P family. In terms of assembly, homohexamer. The cofactor is Mg(2+).

It carries out the reaction [HPr protein]-L-serine + ATP = [HPr protein]-O-phospho-L-serine + ADP + H(+). The catalysed reaction is [HPr protein]-O-phospho-L-serine + phosphate + H(+) = [HPr protein]-L-serine + diphosphate. Functionally, catalyzes the ATP- as well as the pyrophosphate-dependent phosphorylation of a specific serine residue in HPr, a phosphocarrier protein of the phosphoenolpyruvate-dependent sugar phosphotransferase system (PTS). HprK/P also catalyzes the pyrophosphate-producing, inorganic phosphate-dependent dephosphorylation (phosphorolysis) of seryl-phosphorylated HPr (P-Ser-HPr). The protein is HPr kinase/phosphorylase of Neisseria meningitidis serogroup A / serotype 4A (strain DSM 15465 / Z2491).